Reading from the N-terminus, the 193-residue chain is Cilia- and flagella-associated protein 20 (193 aa).

It belongs to the CFAP20 family. As to quaternary structure, microtubule inner protein component of sperm flagellar doublet microtubules.

It localises to the nucleus. Its subcellular location is the cytoplasm. It is found in the cytoskeleton. The protein localises to the microtubule organizing center. The protein resides in the centrosome. It localises to the centriole. Its subcellular location is the cilium basal body. It is found in the cilium axoneme. The protein localises to the flagellum axoneme. Functionally, cilium- and flagellum-specific protein that plays a role in axonemal structure organization and motility. Microtubule inner protein (MIP) part of the dynein-decorated doublet microtubules (DMTs) in cilia axoneme, which is required for motile cilia beating. Involved in the regulation of the size and morphology of cilia. Required for axonemal microtubules polyglutamylation. In Homo sapiens (Human), this protein is Cilia- and flagella-associated protein 20.